The chain runs to 459 residues: Cysteine--tRNA ligase (459 aa).

Residue C27 participates in Zn(2+) binding. The 'HIGH' region motif lies at 29–39 (ITVYDDCHIGH). Residues C208, H233, and E237 each contribute to the Zn(2+) site. The 'KMSKS' region signature appears at 265–269 (KMSKS). An ATP-binding site is contributed by K268.

Belongs to the class-I aminoacyl-tRNA synthetase family. Monomer. Zn(2+) serves as cofactor.

It localises to the cytoplasm. The enzyme catalyses tRNA(Cys) + L-cysteine + ATP = L-cysteinyl-tRNA(Cys) + AMP + diphosphate. This is Cysteine--tRNA ligase from Francisella philomiragia subsp. philomiragia (strain ATCC 25017 / CCUG 19701 / FSC 153 / O#319-036).